A 357-amino-acid polypeptide reads, in one-letter code: Isopenicillin-N N-acyltransferase (357 aa).

Residues Asp-121 and Arg-310 each contribute to the 6-aminopenicillanate site.

It belongs to the peptidase C45 family. As to quaternary structure, the active form of the enzyme results from processing of the 40-kDa monomeric precursor to a heterodimer containing subunits of 11 and 29 kDa. Post-translationally, the pre-AAT protein is synthesized as 40 kDa precursor which is then self-processed into an 11 kDa (protein A) and a 29 kDa (protein B). The B protein carries AAT activity.

It is found in the peroxisome matrix. The catalysed reaction is isopenicillin N + phenylacetyl-CoA + H2O = penicillin G + L-2-aminoadipate + CoA + H(+). It participates in antibiotic biosynthesis; penicillin G biosynthesis; penicillin G from L-alpha-aminoadipate and L-cysteine and L-valine: step 3/3. In terms of biological role, isopenicillin-N N-acyltransferase; part of the gene cluster that mediates the biosynthesis of penicillin, the world's most important antibiotic. AatA catalyzes the exchange of the alpha-aminoadipyl side chain of isopenicillin N for phenylacetic acid to yield penicillin. This step occurs in the peroxisomal matrix and the penM and paaT transporters are involved in the isopenicillin N and phenylacetic acid import into the peroxisome, respectively. The penicillin biosynthesis occurs via 3 enzymatic steps, the first corresponding to the production of the tripeptide N-[(5S)-5-amino-5-carboxypentanoyl]-L-cysteinyl-D-valine (LLD-ACV or ACV) by the NRPS acvA. The tripeptide ACV is then cyclized to isopenicillin N (IPN) by the isopenicillin N synthase ipnA that forms the beta-lactam nucleus. Finally, the alpha-aminoadipyl side chain is exchanged for phenylacetic acid by the isopenicillin N acyltransferase aatA to yield penicillin in the peroxisomal matrix. This Penicillium chrysogenum (Penicillium notatum) protein is Isopenicillin-N N-acyltransferase.